A 237-amino-acid chain; its full sequence is Keratin-associated protein 5-5 (237 aa).

8 tandem repeats follow at residues 62-65, 68-71, 74-77, 159-162, 178-181, 188-191, 198-201, and 227-230. The segment at 62–230 is 8 X 4 AA repeats of C-C-X-P; it reads CCVPVCCCKP…CCCQSSCCVP (169 aa).

It belongs to the KRTAP type 5 family. As to quaternary structure, interacts with hair keratins. In terms of tissue distribution, restricted to hair root, not detected in any other tissues.

Functionally, in the hair cortex, hair keratin intermediate filaments are embedded in an interfilamentous matrix, consisting of hair keratin-associated protein (KRTAP), which are essential for the formation of a rigid and resistant hair shaft through their extensive disulfide bond cross-linking with abundant cysteine residues of hair keratins. The matrix proteins include the high-sulfur and high-glycine-tyrosine keratins. The sequence is that of Keratin-associated protein 5-5 (KRTAP5-5) from Homo sapiens (Human).